The following is a 666-amino-acid chain: ATP-dependent RNA helicase DDX51 (666 aa).

Ala-2 is subject to N-acetylalanine. The disordered stretch occupies residues 9 to 152; sequence YPGPDAAAAA…AAPDGPALEE (144 aa). The segment covering 10–28 has biased composition (low complexity); sequence PGPDAAAAAGPEGAEAGAH. The segment covering 33–48 has biased composition (basic and acidic residues); it reads ALLERLQSRARERQQQ. Residues 49–58 are compositionally biased toward low complexity; the sequence is REPAQTEAAA. The span at 65 to 75 shows a compositional bias: basic residues; that stretch reads RRRRRPRRRRR. Phosphoserine is present on residues Ser-83 and Ser-103. A compositionally biased stretch (acidic residues) spans 97-108; that stretch reads EDAGAESNEEAP. The Q motif signature appears at 221 to 229; that stretch reads YFPVQAAVI. The region spanning 243-452 is the Helicase ATP-binding domain; sequence GRGGYRPSDL…QLGLHQPRLF (210 aa). 256 to 263 serves as a coordination point for ATP; the sequence is APTGSGKT. Residues 371–374 carry the DEAD box motif; the sequence is DEAD. The Helicase C-terminal domain occupies 494 to 640; that stretch reads VVLHLVLEMG…RHELSSKLLQ (147 aa).

It belongs to the DEAD box helicase family. DDX51/DBP6 subfamily.

The protein resides in the nucleus. It localises to the nucleolus. The catalysed reaction is ATP + H2O = ADP + phosphate + H(+). In terms of biological role, ATP-binding RNA helicase involved in the biogenesis of 60S ribosomal subunits. In Homo sapiens (Human), this protein is ATP-dependent RNA helicase DDX51 (DDX51).